The sequence spans 164 residues: Interferon gamma (164 aa).

The first 19 residues, 1–19, serve as a signal peptide directing secretion; the sequence is MTCQTYNLFVLSVIMIYYG. 2 N-linked (GlcNAc...) asparagine glycosylation sites follow: Asn-42 and Asn-61.

The protein belongs to the type II (or gamma) interferon family. In terms of assembly, homodimer.

It is found in the secreted. Its function is as follows. Produced by lymphocytes activated by specific antigens or mitogens. IFN-gamma, in addition to having antiviral activity, has important immunoregulatory functions. It is a potent activator of macrophages, it has antiproliferative effects on transformed cells and it can potentiate the antiviral and antitumor effects of the type I interferons. In Coturnix japonica (Japanese quail), this protein is Interferon gamma (IFNG).